A 792-amino-acid chain; its full sequence is MSLPTKRSTFSAASASDDSSYSSPPMKKAKNDLHHSPQHPNTADKVVGFHMEEDPTPAAANLSRKKATLPQPTKKFVIKLNKAKPTLPTNFEENTWEKLQSAIRAIFLKKKISFDLESLYQAVDNLCLHKLDGKLYDQIEKECEEHISAALQSLVGQNTDLTVFLSRVEKCWQDFCDQMLMIRSIALTLDRKYVIQNPNVRSLWEMGLQLFRKHLSLAPEVEQRTVKGLLSMIEKERLAEAVNRTLLSHLLKMFTALGIYMESFEKPFLEGTSEFYAAEGMKYMQQSDVPEYLKHVEGRLHEENERCILYIDAVTRKPLITTVERQLLERHILVVLEKGFTTLMDGRRTEDLQRMQTLFSRVNALESLRQALSSYVRKTGQKIVMDEEKDKDMVQSLLDFKASLDIIWEESFYKNESFGNTIKDSFEHLINLRQNRPAELIAKFLDEKLRAGNKGTSEEELESVLEKVLVLFRFIQGKDVFEAFYKKDLAKRLLLGKSASIDAEKSMISKLKTECGSQFTNKLEGMFKDIELSKEINESFKQSSQARTKLPSGIEMSVHVLTTGYWPTYPPMDVKLPHELNVYQDIFKEFYLSKYSGRRLMWQNSLGHCVLKADFSKGKKELAVSLFQAVVLMLFNDAMKLSFEDIKDSTSIEDKELRRTLQSLACGKVRVLQKNPKGRDVEDGDEFEFNDEFAAPLYRIKVNAIQMKETVEENTSTTERVFQDRQYQIDAAIVRIMKTRKVLSHTLLITELFQQLKFPIKPADLKKRIESLIDREYLEREKSNPQIYNYLA.

Over residues methionine 1–phenylalanine 10 the composition is skewed to polar residues. A disordered region spans residues methionine 1–alanine 43. A compositionally biased stretch (low complexity) spans serine 11 to serine 23. One can recognise a Cullin neddylation domain in the interval aspartate 724–asparagine 784. Residue lysine 738 forms a Glycyl lysine isopeptide (Lys-Gly) (interchain with G-Cter in NEDD8) linkage.

The protein belongs to the cullin family. Interacts with COP10, CSN3, CSN4, CSN5, CSN8, DDB1A, DDB1B, DDB2, DET1 and RBX1. Post-translationally, neddylated (rubylated). Deneddylated via its interaction with the COP9 signalosome (CSN) complex. In terms of tissue distribution, ubiquitous.

It localises to the nucleus. The protein operates within protein modification; protein ubiquitination. In terms of biological role, component of the CUL4-RBX1-CDD (COP10-DDB1a-DET1) E3 ubiquitin-protein ligase complex which mediates the ubiquitination and subsequent proteasomal degradation of target proteins. Participates in the CDD complex to light-mediated control of development. May repress photomorphogenesis through enhancing COP1 E3 ubiquitin-protein ligase activity. Acts together with the CUL4-DDB1-COP1-SPA E3 ubiquitin-protein ligase complexes in the repression of photomorphogenesis and flowering time. Component ot the CUL4-RBX1-DDB1-PRL1 E3 ubiquitin-protein ligase complex which mediates ubiquitination and subsequent degradation of AKIN10. Component of the CUL4-RBX1-DDB1-DWA1/DWA2 E3 ubiquitin-protein ligase complex that acts as a negative regulator in abscisic acid (ABA) signaling and may target ABI5 for degradation. This is Cullin-4 (CUL4) from Arabidopsis thaliana (Mouse-ear cress).